Reading from the N-terminus, the 709-residue chain is Glycerol kinase (709 aa).

A substrate-binding site is contributed by threonine 56. Residue arginine 60 coordinates ATP. The disordered stretch occupies residues 86-110 (KIGVSGLRRPSTAPARETPNAGDIK). Arginine 201, tyrosine 258, and aspartate 386 together coordinate substrate. Residues threonine 408, glycine 463, and 584 to 588 (GMSRS) contribute to the ATP site.

It belongs to the FGGY kinase family.

The enzyme catalyses glycerol + ATP = sn-glycerol 3-phosphate + ADP + H(+). Its pathway is polyol metabolism; glycerol degradation via glycerol kinase pathway; sn-glycerol 3-phosphate from glycerol: step 1/1. Key enzyme in the regulation of glycerol uptake and metabolism. Catalyzes the phosphorylation of glycerol to yield sn-glycerol 3-phosphate. This Saccharomyces cerevisiae (strain ATCC 204508 / S288c) (Baker's yeast) protein is Glycerol kinase (GUT1).